The sequence spans 309 residues: Oxygen-dependent coproporphyrinogen-III oxidase (309 aa).

A substrate-binding site is contributed by S94. H98 and H108 together coordinate a divalent metal cation. The active-site Proton donor is the H108. Residue 110–112 (NVR) participates in substrate binding. A divalent metal cation contacts are provided by H147 and H177. Residues 242–277 (YVEFNLVWDRGTLFGLQTGGRTESILMSLPPLVRWE) are important for dimerization. A substrate-binding site is contributed by 260 to 262 (GGR).

It belongs to the aerobic coproporphyrinogen-III oxidase family. In terms of assembly, homodimer. A divalent metal cation is required as a cofactor.

It localises to the cytoplasm. It catalyses the reaction coproporphyrinogen III + O2 + 2 H(+) = protoporphyrinogen IX + 2 CO2 + 2 H2O. It participates in porphyrin-containing compound metabolism; protoporphyrin-IX biosynthesis; protoporphyrinogen-IX from coproporphyrinogen-III (O2 route): step 1/1. Its function is as follows. Involved in the heme biosynthesis. Catalyzes the aerobic oxidative decarboxylation of propionate groups of rings A and B of coproporphyrinogen-III to yield the vinyl groups in protoporphyrinogen-IX. This Yersinia pseudotuberculosis serotype O:1b (strain IP 31758) protein is Oxygen-dependent coproporphyrinogen-III oxidase.